The sequence spans 73 residues: Structural DNA-binding protein p10 (73 aa).

Residues 1–35 form a disordered region; sequence MPTKAGTKSTAHKKTTTKGPSKSPKGKTHATALHQ.

This sequence belongs to the asfivirus P10 family.

The protein resides in the virion. Functionally, may play a role in genome packaging through direct interaction with viral DNA. Binds to ssDNA and dsDNA with the same apparent affinity in vitro. This is Structural DNA-binding protein p10 from African swine fever virus (isolate Tick/Malawi/Lil 20-1/1983) (ASFV).